A 481-amino-acid polypeptide reads, in one-letter code: Putative amino-acid transporter CPE0389 (481 aa).

The next 13 helical transmembrane spans lie at 7-27 (LGVI…GVYN), 36-56 (ASAG…WFIA), 87-107 (FLMA…YAVL), 127-147 (LSIA…LAGV), 156-176 (IGTI…LFSF), 208-228 (STML…VVSG), 241-261 (FLGF…PLGV), 289-309 (VIMN…WTVM), 338-358 (FSLL…HFAG), 364-384 (MLSI…LYLF), 401-421 (RKYA…LIYA), 422-442 (AGIN…PVFI), and 461-481 (YFAI…FKFM).

It belongs to the amino acid-polyamine-organocation (APC) superfamily. Basic amino acid/polyamine antiporter (APA) (TC 2.A.3.2) family.

It localises to the cell membrane. Its function is as follows. Could be an amino acid transporter. This chain is Putative amino-acid transporter CPE0389, found in Clostridium perfringens (strain 13 / Type A).